A 162-amino-acid chain; its full sequence is Scytalone dehydratase-like protein claB (162 aa).

Tyr48 contributes to the substrate binding site. Residues His83 and His108 contribute to the active site.

This sequence belongs to the scytalone dehydratase family.

Its pathway is pigment biosynthesis. Functionally, scytalone dehydratase-like protein; part of the gene cluster that mediates the biosynthesis of the bianthraquinone cladofulvin, a conidial pigment not required for virulence but that plays a role in fitness and resistance to environmental stresses including UV light and low-temperature stress. The pathway begins with the synthesis of atrochrysone thioester by the polyketide synthase (PKS) claG. The atrochrysone carboxyl ACP thioesterase claF then breaks the thioester bond and releases the atrochrysone carboxylic acid from claG. This compound is decarboxylated by claH to yield emodin, which is further converted to chrysophanol hydroquinone by the reductase claC and the dehydratase claB. The cytochrome P450 monooxygenase claM then catalyzes the dimerization of nataloe-emodin to cladofulvin. This chain is Scytalone dehydratase-like protein claB, found in Passalora fulva (Tomato leaf mold).